A 214-amino-acid chain; its full sequence is Phosphatidylserine decarboxylase proenzyme (214 aa).

The active-site Schiff-base intermediate with substrate; via pyruvic acid is the Ser-182. Ser-182 bears the Pyruvic acid (Ser); by autocatalysis mark.

Belongs to the phosphatidylserine decarboxylase family. PSD-A subfamily. In terms of assembly, heterodimer of a large membrane-associated beta subunit and a small pyruvoyl-containing alpha subunit. Pyruvate is required as a cofactor. In terms of processing, is synthesized initially as an inactive proenzyme. Formation of the active enzyme involves a self-maturation process in which the active site pyruvoyl group is generated from an internal serine residue via an autocatalytic post-translational modification. Two non-identical subunits are generated from the proenzyme in this reaction, and the pyruvate is formed at the N-terminus of the alpha chain, which is derived from the carboxyl end of the proenzyme. The post-translation cleavage follows an unusual pathway, termed non-hydrolytic serinolysis, in which the side chain hydroxyl group of the serine supplies its oxygen atom to form the C-terminus of the beta chain, while the remainder of the serine residue undergoes an oxidative deamination to produce ammonia and the pyruvoyl prosthetic group on the alpha chain.

It is found in the cell membrane. It carries out the reaction a 1,2-diacyl-sn-glycero-3-phospho-L-serine + H(+) = a 1,2-diacyl-sn-glycero-3-phosphoethanolamine + CO2. The protein operates within phospholipid metabolism; phosphatidylethanolamine biosynthesis; phosphatidylethanolamine from CDP-diacylglycerol: step 2/2. Functionally, catalyzes the formation of phosphatidylethanolamine (PtdEtn) from phosphatidylserine (PtdSer). The sequence is that of Phosphatidylserine decarboxylase proenzyme from Burkholderia cenocepacia (strain HI2424).